We begin with the raw amino-acid sequence, 274 residues long: Rhamnulose-1-phosphate aldolase (274 aa).

E117 is an active-site residue. Zn(2+) contacts are provided by H141, H143, and H212.

The protein belongs to the aldolase class II family. RhaD subfamily. Homotetramer. Zn(2+) serves as cofactor.

The protein resides in the cytoplasm. The catalysed reaction is L-rhamnulose 1-phosphate = (S)-lactaldehyde + dihydroxyacetone phosphate. The protein operates within carbohydrate degradation; L-rhamnose degradation; glycerone phosphate from L-rhamnose: step 3/3. In terms of biological role, catalyzes the reversible cleavage of L-rhamnulose-1-phosphate to dihydroxyacetone phosphate (DHAP) and L-lactaldehyde. The sequence is that of Rhamnulose-1-phosphate aldolase from Shigella sonnei (strain Ss046).